The chain runs to 473 residues: Tyrosine phenol-lyase (473 aa).

K257 is modified (N6-(pyridoxal phosphate)lysine).

Belongs to the beta-eliminating lyase family. As to quaternary structure, homotetramer. The cofactor is pyridoxal 5'-phosphate.

The enzyme catalyses L-tyrosine + H2O = phenol + pyruvate + NH4(+). The chain is Tyrosine phenol-lyase from Intrasporangium calvum (strain ATCC 23552 / DSM 43043 / JCM 3097 / NBRC 12989 / NCIMB 10167 / NRRL B-3866 / 7 KIP).